Reading from the N-terminus, the 498-residue chain is Ribosomal RNA small subunit methyltransferase G 2 (498 aa).

The tract at residues M1 to I230 is methyltransferase G. The S-adenosyl-L-methionine site is built by G89, M94, and R154. The tract at residues R231–A498 is methyltransferase TrmH family.

In the N-terminal section; belongs to the methyltransferase superfamily. RNA methyltransferase RsmG family. It in the C-terminal section; belongs to the class IV-like SAM-binding methyltransferase superfamily. RNA methyltransferase TrmH family.

The protein localises to the cytoplasm. The enzyme catalyses guanosine(527) in 16S rRNA + S-adenosyl-L-methionine = N(7)-methylguanosine(527) in 16S rRNA + S-adenosyl-L-homocysteine. Functionally, specifically methylates the N7 position of guanine in position 527 of 16S rRNA. This Syntrophobacter fumaroxidans (strain DSM 10017 / MPOB) protein is Ribosomal RNA small subunit methyltransferase G 2 (rsmG2).